The chain runs to 98 residues: Flagellar hook-basal body complex protein FliE (98 aa).

The span at 1–23 (MNNINDLRLNNNISNTNKSQNST) shows a compositional bias: low complexity. A disordered region spans residues 1–24 (MNNINDLRLNNNISNTNKSQNSTG).

Belongs to the FliE family.

It is found in the bacterial flagellum basal body. This chain is Flagellar hook-basal body complex protein FliE, found in Campylobacter jejuni subsp. jejuni serotype O:2 (strain ATCC 700819 / NCTC 11168).